The sequence spans 504 residues: PE-PGRS family protein PE_PGRS62 (504 aa).

One can recognise a PE domain in the interval 4–94 (VVTVPEAVAA…AAYLNTESAN (91 aa)).

It belongs to the mycobacterial PE family. PGRS subfamily. In terms of assembly, interacts with host Toll-like receptor 2 (TLR2).

The protein resides in the secreted. Its subcellular location is the cell wall. In terms of biological role, supports mycobacterial virulence via inhibition of phagosome maturation and host inducible nitric oxide synthase (iNOS) expression. May promote the survival within macrophages by disturbing the cytokines profiles and blocking the endoplasmic reticulum (ER) stress-mediated apoptosis. May also affect bacterial cell wall composition. Expression in Mycobacterium smegmatis, a nonpathogenic species naturally deficient in PE_PGRS genes, results in enhanced resistance to various in vitro stresses. It also leads to phagosome maturation arrest and increased survival in macrophages. This is PE-PGRS family protein PE_PGRS62 from Mycobacterium tuberculosis (strain ATCC 25618 / H37Rv).